The chain runs to 323 residues: MENMGDSSIGPGHPHLPPGFRFHPTDEELVVHYLKKKADSVPLPVSIIAEIDLYKFDPWELPSKASFGEHEWYFFSPRDRKYPNGVRPNRAATSGYWKATGTDKPIFTCNSHKVGVKKALVFYGGKPPKGIKTDWIMHEYRLTDGNLSTAAKPPDLTTTRKNSLRLDDWVLCRIYKKNSSQRPTMERVLLREDLMEGMLSKSSANSSSTSVLDNNDNNNNNNEEHFFDGMVVSSDKRSLCGQYRMGHEASGSSSFGSFLSSKRFHHTGDLNNDNYNVSFVSMLSEIPQSSGFHANGVMDTTSSLADHGVLRQAFQLPNMNWHS.

In terms of domain architecture, NAC spans 16-177 (LPPGFRFHPT…DWVLCRIYKK (162 aa)). The DNA-binding element occupies 114–183 (VGVKKALVFY…IYKKNSSQRP (70 aa)). The segment covering 201–221 (KSSANSSSTSVLDNNDNNNNN) has biased composition (low complexity). The interval 201-223 (KSSANSSSTSVLDNNDNNNNNNE) is disordered.

Expressed specifically in the tapetum.

The protein resides in the nucleus. In terms of biological role, transcription factor of the NAC family. May be associated with anther development and pollen production. Required for normal seed development and morphology. This chain is NAC transcription factor 25 (NAC025), found in Arabidopsis thaliana (Mouse-ear cress).